The sequence spans 276 residues: Myoblast determination protein 1 homolog 1 (276 aa).

The bHLH domain occupies 84 to 135 (DRRKAATMRERRRLSKVNDAFETLKRCTSTNPNQRLPKVDILRNAISYIESL). The interval 228 to 253 (CPAVQDGSEGSSPCSPGDGSIASENG) is disordered.

In terms of assembly, efficient DNA binding requires dimerization with another bHLH protein.

Its subcellular location is the nucleus. May act as a transcriptional activator that promotes transcription of muscle-specific target genes and plays a role in muscle differentiation. This Oncorhynchus mykiss (Rainbow trout) protein is Myoblast determination protein 1 homolog 1 (myod1).